A 263-amino-acid polypeptide reads, in one-letter code: Histidine racemase (263 aa).

C67 (proton acceptor) is an active-site residue. C209 serves as the catalytic Proton donor.

Belongs to the histidine racemase family. Homodimer.

It carries out the reaction L-histidine = D-histidine. Functionally, cofactor-independent isomerase that catalyzes the reversible conversion of L-histidine to D-histidine. May play a role in growth of F.nucleatum. The protein is Histidine racemase of Fusobacterium nucleatum subsp. nucleatum (strain ATCC 23726 / VPI 4351).